Reading from the N-terminus, the 251-residue chain is Probable transcriptional regulatory protein Franean1_5147 (251 aa).

It belongs to the TACO1 family.

The protein resides in the cytoplasm. The polypeptide is Probable transcriptional regulatory protein Franean1_5147 (Parafrankia sp. (strain EAN1pec)).